The chain runs to 204 residues: Bcl-2-like protein 10 (204 aa).

Positions 86–105 (LSDSPGPTWGRVVTLVTFAG) match the BH1 motif. A required for Ca(2+) binding region spans residues 118–133 (WKKWGFQPRLKEQEGD). Residues Lys119, Lys120, and Lys128 each participate in a glycyl lysine isopeptide (Lys-Gly) (interchain with G-Cter in ubiquitin) cross-link. Positions 156 to 167 (WLQAQGGWDGFC) match the BH2 motif. A helical membrane pass occupies residues 183–200 (LVQAFLSCLLTTAFIYLW).

It belongs to the Bcl-2 family. Interacts with BAX. Interacts with BCL2 and BCL2L1/BCLX. Interacts with APAF1. Interacts with ITPR1, ITPR2 and ITPR3; the interaction with ITPR1 is increased in the presence of AHCLY1. Interacts with AHCYL1. Interacts with HIP1R (via ENTH and I/LWEQ domains). Interacts with CASP9. Interacts with BCL2L11/BIM. Interacts with BIK. Interacts with UBQLN4. Interacts with NME2/NM23-H2. Interacts with PMAIP1/NOXA. Interacts with TPX2. Interacts with UBQLN1; in the cytoplasm. Interacts (via BH1 domain) with BECN1. It depends on Ca(2+) as a cofactor. Monoubiquitinated by UBQLN1; results in stabilization of BCL2L10 protein abundance and in relocalization from mitochondria to cytoplasm. In terms of tissue distribution, widely expressed in adult tissues. Preferentially expressed in lung, liver and kidney.

It localises to the mitochondrion. The protein resides in the nucleus membrane. The protein localises to the endoplasmic reticulum. Its subcellular location is the cytoplasm. It is found in the cytoskeleton. It localises to the spindle. Functionally, promotes cell survival by suppressing apoptosis induced by BAX but not BAK. Increases binding of AHCYL1/IRBIT to ITPR1. Reduces ITPR1-mediated calcium release from the endoplasmic reticulum cooperatively with AHCYL1/IRBIT under normal cellular conditions. Under apoptotic stress conditions, dissociates from ITPR1 and is displaced from mitochondria-associated endoplasmic reticulum membranes, leading to increased Ca(2+) transfer to mitochondria which promotes apoptosis. Required for the correct formation of the microtubule organizing center during oocyte cell division, potentially via regulation of protein abundance and localization of other microtubule organizing center components such as AURKA and TPX2. The sequence is that of Bcl-2-like protein 10 from Homo sapiens (Human).